We begin with the raw amino-acid sequence, 196 residues long: Adenylyl-sulfate kinase (196 aa).

31-38 serves as a coordination point for ATP; it reads GLSGAGKS. The Phosphoserine intermediate role is filled by Ser-105.

The protein belongs to the APS kinase family.

The enzyme catalyses adenosine 5'-phosphosulfate + ATP = 3'-phosphoadenylyl sulfate + ADP + H(+). It participates in sulfur metabolism; hydrogen sulfide biosynthesis; sulfite from sulfate: step 2/3. Functionally, catalyzes the synthesis of activated sulfate. The protein is Adenylyl-sulfate kinase (cysC) of Pseudomonas aeruginosa (strain ATCC 15692 / DSM 22644 / CIP 104116 / JCM 14847 / LMG 12228 / 1C / PRS 101 / PAO1).